A 156-amino-acid polypeptide reads, in one-letter code: 6,7-dimethyl-8-ribityllumazine synthase (156 aa).

5-amino-6-(D-ribitylamino)uracil-binding positions include phenylalanine 22, alanine 57–glutamate 59, and serine 81–isoleucine 83. A (2S)-2-hydroxy-3-oxobutyl phosphate-binding site is contributed by glycine 86–threonine 87. Catalysis depends on histidine 89, which acts as the Proton donor. A 5-amino-6-(D-ribitylamino)uracil-binding site is contributed by phenylalanine 114. A (2S)-2-hydroxy-3-oxobutyl phosphate-binding site is contributed by arginine 128.

It belongs to the DMRL synthase family. As to quaternary structure, forms an icosahedral capsid composed of 60 subunits, arranged as a dodecamer of pentamers.

It catalyses the reaction (2S)-2-hydroxy-3-oxobutyl phosphate + 5-amino-6-(D-ribitylamino)uracil = 6,7-dimethyl-8-(1-D-ribityl)lumazine + phosphate + 2 H2O + H(+). It participates in cofactor biosynthesis; riboflavin biosynthesis; riboflavin from 2-hydroxy-3-oxobutyl phosphate and 5-amino-6-(D-ribitylamino)uracil: step 1/2. Catalyzes the formation of 6,7-dimethyl-8-ribityllumazine by condensation of 5-amino-6-(D-ribitylamino)uracil with 3,4-dihydroxy-2-butanone 4-phosphate. This is the penultimate step in the biosynthesis of riboflavin. The polypeptide is 6,7-dimethyl-8-ribityllumazine synthase (Aliivibrio salmonicida (strain LFI1238) (Vibrio salmonicida (strain LFI1238))).